Consider the following 549-residue polypeptide: Cilia- and flagella-associated protein 45 (549 aa).

A disordered region spans residues 1–27; that stretch reads MPLSTAGVLSSASTASNRSRNRPRYRT. 2 coiled-coil regions span residues 119–232 and 259–393; these read KEEL…MMEV and IVEQ…KRNQ. Residues 391 to 416 form a disordered region; it reads RNQEVADREWRRKEKENAQKKMETEA.

The protein belongs to the CFAP45 family. As to quaternary structure, microtubule inner protein component of sperm flagellar doublet microtubules. Interacts with AK8; dimerization with AK8 may create a cavity at the interface of the dimer that can accommodate AMP. Interacts with CFAP52. Interacts with ENKUR. Directly interacts with DNALI1. Interacts with DNAH11. Interacts with DNAI1. Expressed in trachea multiciliated cells.

It localises to the cytoplasm. Its subcellular location is the cytoskeleton. The protein resides in the cilium axoneme. The protein localises to the flagellum axoneme. It is found in the cell projection. It localises to the cilium. Its subcellular location is the flagellum. Microtubule inner protein (MIP) part of the dynein-decorated doublet microtubules (DMTs) in cilia axoneme, which is required for motile cilia beating. It is an AMP-binding protein that may facilitate dynein ATPase-dependent ciliary and flagellar beating via adenine nucleotide homeostasis. May function as a donor of AMP to AK8 and hence promote ADP production. This is Cilia- and flagella-associated protein 45 from Bos taurus (Bovine).